Consider the following 352-residue polypeptide: Serine/threonine-protein phosphatase 2A activator 2 (352 aa).

Belongs to the PTPA-type PPIase family.

It is found in the cytoplasm. The enzyme catalyses [protein]-peptidylproline (omega=180) = [protein]-peptidylproline (omega=0). PPIases accelerate the folding of proteins. It catalyzes the cis-trans isomerization of proline imidic peptide bonds in oligopeptides. Acts as a regulatory subunit for PP2A-like phosphatases modulating their activity or substrate specificity, probably by inducing a conformational change in the catalytic subunit, a direct target of the PPIase. Can reactivate inactive phosphatase PP2A-phosphatase methylesterase complexes (PP2Ai) in presence of ATP and Mg(2+) by dissociating the inactive form from the complex. This is Serine/threonine-protein phosphatase 2A activator 2 (rrd2) from Schizosaccharomyces pombe (strain 972 / ATCC 24843) (Fission yeast).